A 175-amino-acid chain; its full sequence is Large ribosomal subunit protein uL10 (175 aa).

This sequence belongs to the universal ribosomal protein uL10 family. Part of the ribosomal stalk of the 50S ribosomal subunit. The N-terminus interacts with L11 and the large rRNA to form the base of the stalk. The C-terminus forms an elongated spine to which L12 dimers bind in a sequential fashion forming a multimeric L10(L12)X complex.

Forms part of the ribosomal stalk, playing a central role in the interaction of the ribosome with GTP-bound translation factors. This Synechococcus sp. (strain CC9311) protein is Large ribosomal subunit protein uL10.